We begin with the raw amino-acid sequence, 351 residues long: Mitochondrial mRNA pseudouridine synthase RPUSD3 (351 aa).

The transit peptide at 1 to 25 (MRAVLAREMDGRRVLGRFWSGWRRG) directs the protein to the mitochondrion. A disordered region spans residues 33 to 58 (EDAGFGTEARHQRQPRGSCQRSGPLG). The residue at position 71 (Ser-71) is a Phosphoserine.

Belongs to the pseudouridine synthase RluA family. As to quaternary structure, forms a regulatory protein-RNA complex, consisting of RCC1L, NGRN, RPUSD3, RPUSD4, TRUB2, FASTKD2 and 16S mt-rRNA.

Its subcellular location is the mitochondrion matrix. The catalysed reaction is a uridine in mRNA = a pseudouridine in mRNA. Its function is as follows. Catalyzes uridine to pseudouridine isomerization (pseudouridylation) of specific mitochondrial mRNAs (mt-mRNAs), a post-transcriptional modification necessary for their translation. Acts at position 390 in COXI mt-mRNA and at position 697-699 in mitochondrial COXIII mt-mRNA. As a component of a functional protein-RNA module, consisting of RCC1L, NGRN, RPUSD3, RPUSD4, TRUB2, FASTKD2 and 16S mitochondrial ribosomal RNA (16S mt-rRNA), controls 16S mt-rRNA abundance and may play a role in mitochondrial ribosome biogenesis. The chain is Mitochondrial mRNA pseudouridine synthase RPUSD3 from Homo sapiens (Human).